A 432-amino-acid chain; its full sequence is Glutamyl-tRNA reductase (432 aa).

Substrate is bound by residues 49 to 52, S109, 114 to 116, and Q120; these read TCNR and EGQ. Catalysis depends on C50, which acts as the Nucleophile. An NADP(+)-binding site is contributed by 189-194; sequence GAGKMS.

This sequence belongs to the glutamyl-tRNA reductase family. Homodimer.

Its subcellular location is the plastid. The protein localises to the cyanelle. The enzyme catalyses (S)-4-amino-5-oxopentanoate + tRNA(Glu) + NADP(+) = L-glutamyl-tRNA(Glu) + NADPH + H(+). Its pathway is porphyrin-containing compound metabolism; protoporphyrin-IX biosynthesis; 5-aminolevulinate from L-glutamyl-tRNA(Glu): step 1/2. The protein operates within porphyrin-containing compound metabolism; chlorophyll biosynthesis. Catalyzes the NADPH-dependent reduction of glutamyl-tRNA(Glu) to glutamate 1-semialdehyde (GSA). The protein is Glutamyl-tRNA reductase of Cyanophora paradoxa.